Here is a 53-residue protein sequence, read N- to C-terminus: UPF0391 membrane protein ECA0470 (53 aa).

2 helical membrane passes run 4 to 24 (WGIIFLVIALIAAALGFGGLA) and 30 to 47 (AAKIVFVVGIILFLVSLF).

This sequence belongs to the UPF0391 family.

It is found in the cell membrane. The chain is UPF0391 membrane protein ECA0470 from Pectobacterium atrosepticum (strain SCRI 1043 / ATCC BAA-672) (Erwinia carotovora subsp. atroseptica).